Consider the following 494-residue polypeptide: UPF0371 protein SEQ_1471 (494 aa).

This sequence belongs to the UPF0371 family.

This chain is UPF0371 protein SEQ_1471, found in Streptococcus equi subsp. equi (strain 4047).